The following is a 441-amino-acid chain: UDP-N-acetylmuramoylalanine--D-glutamate ligase (441 aa).

113–119 (GSNAKST) contacts ATP.

This sequence belongs to the MurCDEF family.

The protein resides in the cytoplasm. The catalysed reaction is UDP-N-acetyl-alpha-D-muramoyl-L-alanine + D-glutamate + ATP = UDP-N-acetyl-alpha-D-muramoyl-L-alanyl-D-glutamate + ADP + phosphate + H(+). It functions in the pathway cell wall biogenesis; peptidoglycan biosynthesis. In terms of biological role, cell wall formation. Catalyzes the addition of glutamate to the nucleotide precursor UDP-N-acetylmuramoyl-L-alanine (UMA). The sequence is that of UDP-N-acetylmuramoylalanine--D-glutamate ligase from Alcanivorax borkumensis (strain ATCC 700651 / DSM 11573 / NCIMB 13689 / SK2).